The primary structure comprises 273 residues: Shikimate dehydrogenase (NADP(+)) (273 aa).

Shikimate-binding positions include 15–17 and Thr-62; that span reads SLS. Lys-66 serves as the catalytic Proton acceptor. Glu-78 provides a ligand contact to NADP(+). The shikimate site is built by Asn-87 and Asp-102. Residues 126 to 130, 150 to 155, and Ile-217 contribute to the NADP(+) site; these read GAGGA and NRTIEK. Tyr-219 is a binding site for shikimate. Gly-240 contributes to the NADP(+) binding site.

The protein belongs to the shikimate dehydrogenase family. As to quaternary structure, homodimer.

The catalysed reaction is shikimate + NADP(+) = 3-dehydroshikimate + NADPH + H(+). Its pathway is metabolic intermediate biosynthesis; chorismate biosynthesis; chorismate from D-erythrose 4-phosphate and phosphoenolpyruvate: step 4/7. In terms of biological role, involved in the biosynthesis of the chorismate, which leads to the biosynthesis of aromatic amino acids. Catalyzes the reversible NADPH linked reduction of 3-dehydroshikimate (DHSA) to yield shikimate (SA). The polypeptide is Shikimate dehydrogenase (NADP(+)) (Nitrosopumilus maritimus (strain SCM1)).